The primary structure comprises 173 residues: Co-chaperone protein HscB homolog (173 aa).

The 73-residue stretch at Cys5–Ile77 folds into the J domain.

It belongs to the HscB family. Interacts with HscA and stimulates its ATPase activity.

In terms of biological role, co-chaperone involved in the maturation of iron-sulfur cluster-containing proteins. Seems to help targeting proteins to be folded toward HscA. This chain is Co-chaperone protein HscB homolog, found in Pseudomonas putida (strain GB-1).